The following is a 528-amino-acid chain: Na(+)/H(+) antiporter NhaB (528 aa).

A run of 11 helical transmembrane segments spans residues 23–45 (FAIL…IAGW), 66–86 (PGGL…TQVL), 95–115 (VLLL…LLLY), 130–164 (VSML…FYSI), 203–223 (LLMH…VGEP), 241–261 (IRMS…CFIV), 310–330 (LIVG…SVII), 349–369 (EEAL…GVII), 390–410 (LVIF…VFVG), 448–468 (ATPN…APLI), and 475–495 (MVMM…LAIE).

This sequence belongs to the NhaB Na(+)/H(+) (TC 2.A.34) antiporter family.

The protein localises to the cell inner membrane. The enzyme catalyses 2 Na(+)(in) + 3 H(+)(out) = 2 Na(+)(out) + 3 H(+)(in). Na(+)/H(+) antiporter that extrudes sodium in exchange for external protons. The sequence is that of Na(+)/H(+) antiporter NhaB from Shewanella amazonensis (strain ATCC BAA-1098 / SB2B).